The primary structure comprises 328 residues: Stress response kinase A (328 aa).

Aspartate 201 (proton acceptor) is an active-site residue. Residues asparagine 206 and aspartate 217 each contribute to the Mg(2+) site. The active site involves aspartate 217.

This sequence belongs to the SrkA/RdoA protein kinase family. In terms of assembly, monomer. Mg(2+) serves as cofactor.

It localises to the cytoplasm. It carries out the reaction L-seryl-[protein] + ATP = O-phospho-L-seryl-[protein] + ADP + H(+). The enzyme catalyses L-threonyl-[protein] + ATP = O-phospho-L-threonyl-[protein] + ADP + H(+). A protein kinase that phosphorylates Ser and Thr residues. Probably acts to suppress the effects of stress linked to accumulation of reactive oxygen species. Probably involved in the extracytoplasmic stress response. The polypeptide is Stress response kinase A (Escherichia coli O6:H1 (strain CFT073 / ATCC 700928 / UPEC)).